Consider the following 339-residue polypeptide: Tetraacyldisaccharide 4'-kinase (339 aa).

62 to 69 (VAGGTGKT) is an ATP binding site.

The protein belongs to the LpxK family.

The catalysed reaction is a lipid A disaccharide + ATP = a lipid IVA + ADP + H(+). It participates in glycolipid biosynthesis; lipid IV(A) biosynthesis; lipid IV(A) from (3R)-3-hydroxytetradecanoyl-[acyl-carrier-protein] and UDP-N-acetyl-alpha-D-glucosamine: step 6/6. In terms of biological role, transfers the gamma-phosphate of ATP to the 4'-position of a tetraacyldisaccharide 1-phosphate intermediate (termed DS-1-P) to form tetraacyldisaccharide 1,4'-bis-phosphate (lipid IVA). The sequence is that of Tetraacyldisaccharide 4'-kinase from Xylella fastidiosa (strain M12).